An 882-amino-acid chain; its full sequence is Valine--tRNA ligase (882 aa).

A 'HIGH' region motif is present at residues 52–62; the sequence is PNVTGSLHMGH. Residues 539–543 carry the 'KMSKS' region motif; that stretch reads KMSKS. An ATP-binding site is contributed by Lys542. A coiled-coil region spans residues 816-882; sequence IDVAAERRRL…RINARLAVLQ (67 aa).

The protein belongs to the class-I aminoacyl-tRNA synthetase family. ValS type 1 subfamily. As to quaternary structure, monomer.

It localises to the cytoplasm. It catalyses the reaction tRNA(Val) + L-valine + ATP = L-valyl-tRNA(Val) + AMP + diphosphate. Catalyzes the attachment of valine to tRNA(Val). As ValRS can inadvertently accommodate and process structurally similar amino acids such as threonine, to avoid such errors, it has a 'posttransfer' editing activity that hydrolyzes mischarged Thr-tRNA(Val) in a tRNA-dependent manner. In Mycolicibacterium paratuberculosis (strain ATCC BAA-968 / K-10) (Mycobacterium paratuberculosis), this protein is Valine--tRNA ligase.